The following is a 737-amino-acid chain: Delta and Notch-like epidermal growth factor-related receptor (737 aa).

Residues 1-34 (MQPRRAQAPGAQLLPALALLLLLLGAGPRGSSLA) form the signal peptide. The Extracellular portion of the chain corresponds to 35–640 (NPVPAAPLSA…LTNMPRHSLY (606 aa)). 2 consecutive EGF-like domains span residues 44–92 (APGP…ANCQ) and 94–133 (VADP…PNCE). The segment at 44-133 (APGPCAAQPC…NEGYEGPNCE (90 aa)) is interaction with NOTCH1. 6 cysteine pairs are disulfide-bonded: Cys48–Cys59, Cys53–Cys80, Cys82–Cys91, Cys98–Cys108, Cys103–Cys121, and Cys123–Cys132. Asn223 carries N-linked (GlcNAc...) asparagine glycosylation. 5 consecutive EGF-like domains span residues 309–348 (PGES…TFCE), 349–390 (EYDA…ELCQ), 392–428 (KIDY…SACE), 430–466 (KVDP…PTCA), and 468–503 (LIDF…LYCE). 23 cysteine pairs are disulfide-bonded: Cys319/Cys336, Cys338/Cys347, Cys353/Cys364, Cys358/Cys378, Cys380/Cys389, Cys396/Cys407, Cys401/Cys416, Cys418/Cys427, Cys434/Cys445, Cys439/Cys454, Cys456/Cys465, Cys472/Cys482, Cys477/Cys491, Cys493/Cys502, Cys509/Cys520, Cys514/Cys529, Cys531/Cys540, Cys547/Cys558, Cys552/Cys567, Cys569/Cys578, Cys585/Cys596, Cys590/Cys605, and Cys607/Cys616. The EGF-like 8; calcium-binding domain occupies 505–541 (EYNECLSAPCLNAATCRDLVNGYECVCLAEYKGTHCE). The EGF-like 9 domain maps to 543–579 (YKDPCANVSCLNGATCDSDGLNGTCICAPGFTGEECD). The Follistatin-like domain maps to 546–568 (PCANVSCLNGATCDSDGLNGTCI). Asn564 is a glycosylation site (N-linked (GlcNAc...) asparagine). The EGF-like 10; calcium-binding domain occupies 581–617 (DINECDSNPCHHGGSCLDQPNGYNCHCPHGWVGANCE). Residues 641-661 (IIIGALCVAFILMLIILIVGI) traverse the membrane as a helical segment. The Cytoplasmic segment spans residues 662–737 (CRISRIEYQG…LVTLIKTKDL (76 aa)). The segment at 677–680 (YEEF) is interaction with AP1G1 and somatodendritic targeting. At Ser685 the chain carries Phosphoserine. 2 positions are modified to phosphotyrosine: Tyr711 and Tyr721. Ser722 is subject to Phosphoserine.

Interacts with AP1G1. Interacts with NOTCH1. In terms of tissue distribution, expressed in brain, spinal cord and adrenal gland.

The protein resides in the cell membrane. In terms of biological role, activator of the NOTCH1 pathway. May mediate neuron-glia interaction during astrocytogenesis. This Homo sapiens (Human) protein is Delta and Notch-like epidermal growth factor-related receptor (DNER).